A 139-amino-acid polypeptide reads, in one-letter code: Large ribosomal subunit protein uL16 (139 aa).

A disordered region spans residues leucine 74–valine 94.

It belongs to the universal ribosomal protein uL16 family. In terms of assembly, part of the 50S ribosomal subunit.

Binds 23S rRNA and is also seen to make contacts with the A and possibly P site tRNAs. The sequence is that of Large ribosomal subunit protein uL16 from Saccharopolyspora erythraea (strain ATCC 11635 / DSM 40517 / JCM 4748 / NBRC 13426 / NCIMB 8594 / NRRL 2338).